The sequence spans 447 residues: MQKEKDVAIVGSGLVGSLLAIFLRKQGHKVTVFDRRPDVRNVQFSGRSINLAMSNRGWKALREAGIEDEIRELALPLDKRAMHVEGQSVYFQKYGEEGEAIYSISRGILNRKMIDLAESAGATFRFEEKIWDVDMKEARLYTGESEKSVWKEYQFDLIFGADGAFSRVRHKMQRQSRFNYSQHFIDVGYKELTILANEDGSHKMDNSSFHIWPRGNFMLIAMPNLDGTFTCTLFMPFDGETSFESIKTEDEADIFFEKYFPDIKDEISNLKKDFFKNPTSAMVTIKCFPWSYFDKITLVGDSAHAIVPFYGQGMNAGFEDISVLNEKMNLYGDDWEKVFEDYQTERKPNADAIAELSYRNFVEMSKKTADPKFLLRKKIEQKFAENHPDLWTPLYSRVTFSDKAYSDALKIGDYQREIMDEVMKIPGIEEKWESSEVEEKIISLIKK.

The protein belongs to the aromatic-ring hydroxylase family. KMO subfamily. It depends on FAD as a cofactor.

The catalysed reaction is L-kynurenine + NADPH + O2 + H(+) = 3-hydroxy-L-kynurenine + NADP(+) + H2O. It participates in cofactor biosynthesis; NAD(+) biosynthesis; quinolinate from L-kynurenine: step 1/3. Catalyzes the hydroxylation of L-kynurenine (L-Kyn) to form 3-hydroxy-L-kynurenine (L-3OHKyn). Required for synthesis of quinolinic acid. The polypeptide is Kynurenine 3-monooxygenase (Christiangramia forsetii (strain DSM 17595 / CGMCC 1.15422 / KT0803) (Gramella forsetii)).